Reading from the N-terminus, the 299-residue chain is N-acetylaspartate synthetase (299 aa).

The segment covering 44–57 (AAPGPAAAPPPAAG) has biased composition (pro residues). Positions 44 to 70 (AAPGPAAAPPPAAGPQPHGGTGGAGPP) are disordered. Over residues 60 to 70 (PHGGTGGAGPP) the composition is skewed to gly residues. A helical membrane pass occupies residues 118–138 (YALLAALCFAVTRSLLLTCLV). Residues 143-280 (LALRYYYSRK…VLPGMTLSLA (138 aa)) form the N-acetyltransferase domain.

It belongs to the NAT8 family. As to expression, expressed in brain, including in mesencephalic dopaminergic neurons of the substantia nigra and ventral tegmental area and oligodendrocytes. Expressed in cortical pyramidal neurons and granule cells of the hippocampus (at protein level).

The protein localises to the cytoplasm. The protein resides in the microsome membrane. It is found in the mitochondrion membrane. It localises to the endoplasmic reticulum membrane. The catalysed reaction is L-aspartate + acetyl-CoA = N-acetyl-L-aspartate + CoA + H(+). Its activity is regulated as follows. Aminooxyacetic acid (AOAA) blocks its activity in both cytoplasm and mitochondria. Catalyzes the synthesis of N-acetylaspartate acid (NAA) from L-aspartate and acetyl-CoA. Promotes dopamine uptake by regulating TNF-alpha expression. Attenuates methamphetamine-induced inhibition of dopamine uptake. The sequence is that of N-acetylaspartate synthetase (Nat8l) from Rattus norvegicus (Rat).